The sequence spans 344 residues: Protein RecA (344 aa).

Position 65–72 (65–72) interacts with ATP; that stretch reads GPESSGKT. Positions 323–337 are enriched in basic and acidic residues; sequence ELREKFQPAEAPREA. The interval 323 to 344 is disordered; sequence ELREKFQPAEAPREAGDDEDKE.

The protein belongs to the RecA family.

Its subcellular location is the cytoplasm. Its function is as follows. Can catalyze the hydrolysis of ATP in the presence of single-stranded DNA, the ATP-dependent uptake of single-stranded DNA by duplex DNA, and the ATP-dependent hybridization of homologous single-stranded DNAs. It interacts with LexA causing its activation and leading to its autocatalytic cleavage. In Xanthomonas euvesicatoria pv. vesicatoria (strain 85-10) (Xanthomonas campestris pv. vesicatoria), this protein is Protein RecA.